Here is a 668-residue protein sequence, read N- to C-terminus: Biosynthetic arginine decarboxylase (668 aa).

N6-(pyridoxal phosphate)lysine is present on Lys-105. Residue 286 to 296 (LDVGGGLGVDY) coordinates substrate.

The protein belongs to the Orn/Lys/Arg decarboxylase class-II family. SpeA subfamily. Mg(2+) is required as a cofactor. The cofactor is pyridoxal 5'-phosphate.

The enzyme catalyses L-arginine + H(+) = agmatine + CO2. In terms of biological role, catalyzes the biosynthesis of agmatine from arginine. The chain is Biosynthetic arginine decarboxylase from Rhodopirellula baltica (strain DSM 10527 / NCIMB 13988 / SH1).